Here is a 423-residue protein sequence, read N- to C-terminus: Maltooligosaccharide ABC transporter solute-binding lipoprotein (423 aa).

The signal sequence occupies residues 1–24; sequence MSSKFMKSAAVLGTATLASLLLVA. A lipid anchor (N-palmitoyl cysteine) is attached at cysteine 25. The S-diacylglycerol cysteine moiety is linked to residue cysteine 25. Residues tyrosine 52, aspartate 77, aspartate 83, 103–104, glutamate 148, aspartate 193, asparagine 196, 251–254, tryptophan 274, and lysine 307 contribute to the substrate site; these read DR and EGAG.

This sequence belongs to the bacterial solute-binding protein 1 family.

The protein localises to the cell membrane. Functionally, part of an ABC transporter complex involved in the uptake of maltodextrins. Binds glycogen-derived linear maltooligosaccharides increasing in size from maltotriose to maltooctaose with the highest affinity for maltotriose. Has a very weak affinity for maltose. Has also a very low affinity for maltotetraitol, indicating that the binding is selective for maltooligosaccharides with an intact reducing end. The protein is Maltooligosaccharide ABC transporter solute-binding lipoprotein of Streptococcus pneumoniae serotype 4 (strain ATCC BAA-334 / TIGR4).